Reading from the N-terminus, the 361-residue chain is Peptide chain release factor 1 (361 aa).

Glutamine 235 is subject to N5-methylglutamine. The disordered stretch occupies residues 288 to 307 (AAEAQTRKLQVGSGDRSQRI).

The protein belongs to the prokaryotic/mitochondrial release factor family. Post-translationally, methylated by PrmC. Methylation increases the termination efficiency of RF1.

Its subcellular location is the cytoplasm. In terms of biological role, peptide chain release factor 1 directs the termination of translation in response to the peptide chain termination codons UAG and UAA. This Xanthomonas axonopodis pv. citri (strain 306) protein is Peptide chain release factor 1.